The chain runs to 637 residues: 1-deoxy-D-xylulose-5-phosphate synthase 1 (637 aa).

Thiamine diphosphate contacts are provided by residues histidine 74 and glycine 115–serine 117. Aspartate 146 contributes to the Mg(2+) binding site. Thiamine diphosphate is bound by residues glycine 147 to serine 148, asparagine 175, tyrosine 286, and glutamate 368. Position 175 (asparagine 175) interacts with Mg(2+).

The protein belongs to the transketolase family. DXPS subfamily. As to quaternary structure, homodimer. The cofactor is Mg(2+). Thiamine diphosphate is required as a cofactor.

It catalyses the reaction D-glyceraldehyde 3-phosphate + pyruvate + H(+) = 1-deoxy-D-xylulose 5-phosphate + CO2. The protein operates within metabolic intermediate biosynthesis; 1-deoxy-D-xylulose 5-phosphate biosynthesis; 1-deoxy-D-xylulose 5-phosphate from D-glyceraldehyde 3-phosphate and pyruvate: step 1/1. In terms of biological role, catalyzes the acyloin condensation reaction between C atoms 2 and 3 of pyruvate and glyceraldehyde 3-phosphate to yield 1-deoxy-D-xylulose-5-phosphate (DXP). The sequence is that of 1-deoxy-D-xylulose-5-phosphate synthase 1 from Geobacter sulfurreducens (strain ATCC 51573 / DSM 12127 / PCA).